A 354-amino-acid polypeptide reads, in one-letter code: Chorismate synthase (354 aa).

Arg48 provides a ligand contact to NADP(+). FMN is bound by residues Arg125–Ser127, Asn239–Ala240, Gly280, Lys295–Thr299, and Arg321.

This sequence belongs to the chorismate synthase family. As to quaternary structure, homotetramer. Requires FMNH2 as cofactor.

The enzyme catalyses 5-O-(1-carboxyvinyl)-3-phosphoshikimate = chorismate + phosphate. The protein operates within metabolic intermediate biosynthesis; chorismate biosynthesis; chorismate from D-erythrose 4-phosphate and phosphoenolpyruvate: step 7/7. Catalyzes the anti-1,4-elimination of the C-3 phosphate and the C-6 proR hydrogen from 5-enolpyruvylshikimate-3-phosphate (EPSP) to yield chorismate, which is the branch point compound that serves as the starting substrate for the three terminal pathways of aromatic amino acid biosynthesis. This reaction introduces a second double bond into the aromatic ring system. This chain is Chorismate synthase, found in Christiangramia forsetii (strain DSM 17595 / CGMCC 1.15422 / KT0803) (Gramella forsetii).